A 456-amino-acid polypeptide reads, in one-letter code: Cysteine--tRNA ligase (456 aa).

Zn(2+) is bound at residue Cys28. A 'HIGH' region motif is present at residues 30-40 (ITVYDHCHLGH). The Zn(2+) site is built by Cys209, His234, and Glu238. Positions 266–270 (KMAKS) match the 'KMSKS' region motif. Residue Lys269 coordinates ATP.

This sequence belongs to the class-I aminoacyl-tRNA synthetase family. In terms of assembly, monomer. The cofactor is Zn(2+).

The protein localises to the cytoplasm. The enzyme catalyses tRNA(Cys) + L-cysteine + ATP = L-cysteinyl-tRNA(Cys) + AMP + diphosphate. In Legionella pneumophila (strain Corby), this protein is Cysteine--tRNA ligase.